A 538-amino-acid polypeptide reads, in one-letter code: Xylosidase/arabinosidase 43B (538 aa).

Glu-367 acts as the Proton donor in catalysis.

This sequence belongs to the glycosyl hydrolase 43 family.

It catalyses the reaction Hydrolysis of (1-&gt;4)-beta-D-xylans, to remove successive D-xylose residues from the non-reducing termini.. It carries out the reaction Hydrolysis of terminal non-reducing alpha-L-arabinofuranoside residues in alpha-L-arabinosides.. With respect to regulation, activity is inhibited by Ag(+), Li(+), Cu(2+), Cr(3+), Co(3+), Ni(2+), Mg(2+), Zn(2+), EDTA, SDS and beta-mercaptoethanol; but not by Mn(2+), Pb(2+), Ca(2+) and Fe(3+). Its function is as follows. Bifunctional beta-xylosidase/alpha-L-arabinosidases with a low level of xylanase activity. Is most active on 4-nitrophenyl beta-D-xylopyranoside (pNPX) (defined as 100%), moderate on p-nitrophenyl-alpha-L-arabinofuranoside (pNPA) (56.6%), and weak on beechwood xylan (5.7%) and birchwood xylan (2.7%). Is able to attack xylooligosacchardies with degrees of polymerisation of 2-5, releasing the amounts of reducing sugars in the order of xylopentose &gt; xylotetraose &gt; xylotriose &gt; xylobiose, i.e. the rate of xylose released from xylooligosacchardies increased with the chain length. No activity was detected in the presence of carboxymethyl cellulose-sodium (CMC-Na), sugar beet arabinan, AZCL-arabinan (debranched), 4-nitrophenyl a-D - galactopyranoside, 2-nitrophenyl beta-D-galactopyranoside, and 4-nitrophenyl alpha-D-glucopyranoside. The protein is Xylosidase/arabinosidase 43B of Humicola insolens (Soft-rot fungus).